The following is a 170-amino-acid chain: Large ribosomal subunit protein uL11 (170 aa).

The protein belongs to the universal ribosomal protein uL11 family. In terms of assembly, part of the ribosomal stalk of the 50S ribosomal subunit. Interacts with L10 and the large rRNA to form the base of the stalk. L10 forms an elongated spine to which L12 dimers bind in a sequential fashion forming a multimeric L10(L12)X complex.

Its function is as follows. Forms part of the ribosomal stalk which helps the ribosome interact with GTP-bound translation factors. In Sulfolobus acidocaldarius (strain ATCC 33909 / DSM 639 / JCM 8929 / NBRC 15157 / NCIMB 11770), this protein is Large ribosomal subunit protein uL11.